The primary structure comprises 227 residues: Rho-related GTP-binding protein RhoN (227 aa).

Residue 14–21 (GDAECGKT) participates in GTP binding. The short motif at 36–44 (YVPTVFENY) is the Effector region element. GTP contacts are provided by residues 61 to 65 (DTSGS) and 119 to 122 (CKLD). Positions 186 to 227 (HRQLRRTDSRRGLQRSTQLSGRPDRGNEGEMHKDRAKSCNLM) are disordered. The span at 207–227 (RPDRGNEGEMHKDRAKSCNLM) shows a compositional bias: basic and acidic residues. Cys224 bears the Cysteine methyl ester mark. The S-geranylgeranyl cysteine moiety is linked to residue Cys224. The propeptide at 225–227 (NLM) is removed in mature form.

It belongs to the small GTPase superfamily. Rho family. As to quaternary structure, interacts with the Rho-GAP domain of RACGAP1. Interacts with UBXD5. Interacts with PRAG1. As to expression, expressed specifically in neurons in the brain and spinal cord and also in hepatic stellate cells.

The protein localises to the cytoplasmic vesicle. It is found in the secretory vesicle. Its subcellular location is the acrosome membrane. Functionally, may be specifically involved in neuronal and hepatic functions. Is a C3 toxin-insensitive member of the Rho subfamily. The protein is Rho-related GTP-binding protein RhoN (Rnd2) of Mus musculus (Mouse).